A 253-amino-acid polypeptide reads, in one-letter code: 5'-nucleotidase SurE (253 aa).

4 residues coordinate a divalent metal cation: Asp8, Asp9, Ser40, and Asn93.

It belongs to the SurE nucleotidase family. Requires a divalent metal cation as cofactor.

It localises to the cytoplasm. The enzyme catalyses a ribonucleoside 5'-phosphate + H2O = a ribonucleoside + phosphate. Nucleotidase that shows phosphatase activity on nucleoside 5'-monophosphates. In Methylobacterium sp. (strain 4-46), this protein is 5'-nucleotidase SurE.